Here is a 251-residue protein sequence, read N- to C-terminus: Flap endonuclease Xni (251 aa).

Residue D104 coordinates Mg(2+). Residues 160-249 (VQPQQLPDYW…IDGNLQQLRL (90 aa)) form the 5'-3' exonuclease domain. L171, A172, P180, V182, and I185 together coordinate K(+). An interaction with DNA region spans residues 184 to 189 (GIGPKS).

This sequence belongs to the Xni family. Mg(2+) is required as a cofactor. It depends on K(+) as a cofactor.

Functionally, has flap endonuclease activity. During DNA replication, flap endonucleases cleave the 5'-overhanging flap structure that is generated by displacement synthesis when DNA polymerase encounters the 5'-end of a downstream Okazaki fragment. The polypeptide is Flap endonuclease Xni (Escherichia coli O139:H28 (strain E24377A / ETEC)).